The following is a 311-amino-acid chain: Methionyl-tRNA formyltransferase (311 aa).

111-114 provides a ligand contact to (6S)-5,6,7,8-tetrahydrofolate; sequence SLLP.

The protein belongs to the Fmt family.

The enzyme catalyses L-methionyl-tRNA(fMet) + (6R)-10-formyltetrahydrofolate = N-formyl-L-methionyl-tRNA(fMet) + (6S)-5,6,7,8-tetrahydrofolate + H(+). Functionally, attaches a formyl group to the free amino group of methionyl-tRNA(fMet). The formyl group appears to play a dual role in the initiator identity of N-formylmethionyl-tRNA by promoting its recognition by IF2 and preventing the misappropriation of this tRNA by the elongation apparatus. The protein is Methionyl-tRNA formyltransferase of Caldicellulosiruptor saccharolyticus (strain ATCC 43494 / DSM 8903 / Tp8T 6331).